The sequence spans 1014 residues: Exportin-T (1014 aa).

This sequence belongs to the exportin family.

Its subcellular location is the nucleus. It is found in the cytoplasm. Its function is as follows. tRNA nucleus export receptor which facilitates tRNA translocation across the nuclear pore complex. Involved in pre-tRNA splicing, probably by affecting the interaction of pre-tRNA with splicing endonuclease. The chain is Exportin-T (LOS1) from Podospora anserina (strain S / ATCC MYA-4624 / DSM 980 / FGSC 10383) (Pleurage anserina).